The sequence spans 28 residues: Putative antitoxin AF_1079 (28 aa).

The protein belongs to the UPF0165 family.

Functionally, possibly the antitoxin component of a type II toxin-antitoxin (TA) system. This chain is Putative antitoxin AF_1079, found in Archaeoglobus fulgidus (strain ATCC 49558 / DSM 4304 / JCM 9628 / NBRC 100126 / VC-16).